Here is a 362-residue protein sequence, read N- to C-terminus: Adenosine deaminase (362 aa).

His-19 and His-21 together coordinate Zn(2+). Substrate is bound by residues His-21, Asp-23, and Gly-181. Residue His-208 participates in Zn(2+) binding. The Proton donor role is filled by Glu-211. Asp-300 provides a ligand contact to Zn(2+).

This sequence belongs to the metallo-dependent hydrolases superfamily. Adenosine and AMP deaminases family. Adenosine deaminase subfamily. It depends on Zn(2+) as a cofactor.

It carries out the reaction adenosine + H2O + H(+) = inosine + NH4(+). It catalyses the reaction 2'-deoxyadenosine + H2O + H(+) = 2'-deoxyinosine + NH4(+). Its function is as follows. Catalyzes the hydrolytic deamination of adenosine and 2-deoxyadenosine. The polypeptide is Adenosine deaminase (Mycobacterium marinum (strain ATCC BAA-535 / M)).